The following is a 1962-amino-acid chain: Myosin heavy chain, muscle (1962 aa).

Residues 33-82 (DSKKSCWIPDEKEGYLLGEIKATKGDIVSVGLQGGEVRDIKSEKVEKVNP) form the Myosin N-terminal SH3-like domain. Positions 86 to 777 (EKIEDMADMT…VLGQMEEFRD (692 aa)) constitute a Myosin motor domain. Residue 179–186 (GESGAGKT) participates in ATP binding. The tract at residues 656 to 678 (LNSLMTTLRSTQPHFVRCIIPNE) is actin-binding. The region spanning 780-809 (LGKIMSWMQAWARGYLSRKGFKKLQEQRVA) is the IQ domain. Residues 802–1927 (KLQEQRVALK…KFRAKGRAGS (1126 aa)) are a coiled coil. Disordered regions lie at residues 1822–1862 (ENEL…NHER) and 1922–1962 (KGRA…ENEF).

Belongs to the TRAFAC class myosin-kinesin ATPase superfamily. Myosin family. As to quaternary structure, muscle myosin is a hexameric protein that consists of 2 heavy chain subunits (MHC), 2 alkali light chain subunits (MLC) and 2 regulatory light chain subunits (MLC-2). Expressed in larval and adult muscles. Isoforms containing exon 9a are expressed in indirect flight muscles, exons 9a and 9b are expressed in jump muscles, exons 9b and 9c are expressed in other larval and adult muscles.

Its subcellular location is the cytoplasm. It is found in the myofibril. In terms of biological role, muscle contraction. This chain is Myosin heavy chain, muscle (Mhc), found in Drosophila melanogaster (Fruit fly).